We begin with the raw amino-acid sequence, 136 residues long: Magnetite biomineralization protein Mms6 (136 aa).

The Cytoplasmic segment spans residues 1-85; that stretch reads MGEMEREGAT…AVGGTIWSGK (85 aa). The GL repeat stretch occupies residues 86-95; sequence GLALGLGMGL. Residues 86–106 traverse the membrane as a helical segment; it reads GLALGLGMGLGAWGPLILGVV. Residues 107–136 lie on the Lumenal side of the membrane; sequence GAGAVYAYMKSRDIEAAQSDEEVELRDALS. The segment at 115–136 is MIC, self-assembles, binds magnetite, Fe(2+) and Fe(3+); the sequence is MKSRDIEAAQSDEEVELRDALS.

The protein belongs to the magnetosome Mms6 family. As to quaternary structure, full length protein oligomerizes and interacts with MamA. Post-translationally, may undergo cleavage.

Its subcellular location is the magnetosome membrane. Promotes the formation of magnetite in Fe(2+)-rich conditions, when magnetite is not readily formed. Binds both Fe(2+) and Fe(3+). May help control the production of crystals with a specific morphology. May function with MamX, MamY amd MamZ in biomineralization. The 4 genes of this operon collectively influence magnetosome size and number. In Magnetospirillum gryphiswaldense (strain DSM 6361 / JCM 21280 / NBRC 15271 / MSR-1), this protein is Magnetite biomineralization protein Mms6.